A 313-amino-acid polypeptide reads, in one-letter code: Ribosomal RNA small subunit methyltransferase H (313 aa).

Residues 35–37 (GGH), Asp-55, Phe-79, Asp-100, and Gln-107 each bind S-adenosyl-L-methionine.

The protein belongs to the methyltransferase superfamily. RsmH family.

Its subcellular location is the cytoplasm. The catalysed reaction is cytidine(1402) in 16S rRNA + S-adenosyl-L-methionine = N(4)-methylcytidine(1402) in 16S rRNA + S-adenosyl-L-homocysteine + H(+). Specifically methylates the N4 position of cytidine in position 1402 (C1402) of 16S rRNA. The protein is Ribosomal RNA small subunit methyltransferase H of Burkholderia mallei (strain NCTC 10247).